The sequence spans 865 residues: MHYFRRNCIFFLIVILYGTNSSPSTQNVTSREVVSSVQLSEEESTFYLCPPPVGSTVIRLEPPRKCPEPRKATEWGEGIAILFKENISPYKFKVTLYYKNIIQTTTWTGTTYRQITNRYTDRTPVSIEEITDLIDGKGRCSSKARYLRNNVYVEAFDRDAGEKQVLLKPSKFNTPESRAWHTTNETYTVWGSPWIYRTGTSVNCIVEEMDARSVFPYSYFAMANGDIANISPFYGLSPPEAAAEPMGYPQDNFKQLDSYFSMDLDKRRKASLPVKRNFLITSHFTVGWDWAPKTTRVCSMTKWKEVTEMLRATVNGRYRFMARELSATFISNTTEFDPNRIILGQCIKREAEAAIEQIFRTKYNDSHVKVGHVQYFLALGGFIVAYQPVLSKSLAHMYLRELMRDNRTDEMLDLVNNKHAIYKKNATSLSRLRRDIRNAPNRKITLDDTTAIKSTSSVQFAMLQFLYDHIQTHINDMFSRIATAWCELQNRELVLWHEGIKINPSATASATLGRRVAAKMLGDVAAVSSCTAIDAESVTLQNSMRVITSTNTCYSRPLVLFSYGENQGNIQGQLGENNELLPTLEAVEPCSANHRRYFLFGSGYALFENYNFVKMVDAADIQIASTFVELNLTLLEDREILPLSVYTKEELRDVGVLDYAEVARRNQLHELKFYDINKVIEVDTNYAFMNGLAELFNGMGQVGQAIGKVVVGAAGAIVSTISGVSAFMSNPFGALAIGLIIIAGLVAAFLAYRYVNKLKSNPMKALYPMTTEVLKAQATRELHGEESDDLERTSIDERKLEEAREMIKYMALVSAEERHEKKLRRKRRGTTAVLSDHLAKMRIKNSNPKYDKLPTTYSDSEDDAV.

The N-terminal stretch at 1–21 is a signal peptide; sequence MHYFRRNCIFFLIVILYGTNS. Residues 22 to 731 lie on the Virion surface side of the membrane; it reads SPSTQNVTSR…SGVSAFMSNP (710 aa). An N-linked (GlcNAc...) asparagine; by host glycan is attached at Asn-27. 5 disulfides stabilise this stretch: Cys-49–Cys-530, Cys-66–Cys-486, Cys-140–Cys-204, Cys-298–Cys-346, and Cys-553–Cys-590. The tract at residues 106-112 is involved in fusion and/or binding to host membrane; that stretch reads TWTGTTY. The N-linked (GlcNAc...) asparagine; by host glycan is linked to Asn-184. Positions 191-198 are involved in fusion and/or binding to host membrane; it reads GSPWIYRT. Residues Asn-332, Asn-364, Asn-406, and Asn-425 are each glycosylated (N-linked (GlcNAc...) asparagine; by host). A glycan (N-linked (GlcNAc...) asparagine; by host) is linked at Asn-631. Hydrophobic membrane proximal region stretches follow at residues 676–729 and 683–729; these read INKV…AFMS and DTNY…AFMS. A helical transmembrane segment spans residues 732–752; sequence FGALAIGLIIIAGLVAAFLAY. At 753–865 the chain is on the intravirion side; it reads RYVNKLKSNP…TYSDSEDDAV (113 aa). The Golgi targeting motif lies at 809-812; sequence YMAL. The interval 843 to 865 is disordered; that stretch reads IKNSNPKYDKLPTTYSDSEDDAV. The short motif at 850-853 is the Internalization motif element; that stretch reads YDKL.

The protein belongs to the herpesviridae glycoprotein B family. Homotrimer; disulfide-linked. Binds to heparan sulfate proteoglycans. Interacts with gH/gL heterodimer. In terms of processing, a proteolytic cleavage by host furin generates two subunits that remain linked by disulfide bonds.

Its subcellular location is the virion membrane. It is found in the host cell membrane. It localises to the host endosome membrane. The protein resides in the host Golgi apparatus membrane. Its function is as follows. Envelope glycoprotein that forms spikes at the surface of virion envelope. Essential for the initial attachment to heparan sulfate moieties of the host cell surface proteoglycans. Involved in fusion of viral and cellular membranes leading to virus entry into the host cell. Following initial binding to its host receptors, membrane fusion is mediated by the fusion machinery composed at least of gB and the heterodimer gH/gL. May be involved in the fusion between the virion envelope and the outer nuclear membrane during virion egress. This Gallid herpesvirus 2 (strain Chicken/Md5/ATCC VR-987) (GaHV-2) protein is Envelope glycoprotein B.